A 1045-amino-acid chain; its full sequence is Desmoglein-1 (1045 aa).

An N-terminal signal peptide occupies residues 1–23 (MNWPFFRTAAVLFIFLVVLEVNS). Positions 24 to 49 (EFRIQVRDYNTKNGTIKWHSIRRQKR) are excised as a propeptide. N-linked (GlcNAc...) asparagine glycosylation is found at N36, N110, and N180. 4 Cadherin domains span residues 50 to 158 (EWIK…PVFS), 159 to 270 (MSTF…PYME), 271 to 385 (LPSN…GSVF), and 386 to 496 (RPGS…TDGA). At 50–546 (EWIKFAAACR…HPLDNVHFGP (497 aa)) the chain is on the extracellular side. A helical transmembrane segment spans residues 547–567 (AGIGLLIMGFLVLGLVPFLLM). The Cytoplasmic portion of the chain corresponds to 568 to 1045 (YCDCGGAPGG…TKYSTVQYTK (478 aa)). Desmoglein repeat repeat units lie at residues 814–840 (TYPSGPGVHHPMPIPDPLSYGNVTMTE), 841–870 (SYTTSGILKPSVHVHDNRQASNVVVTERVV), 871–900 (GPISGANLHGMLEMPDLRDGSNVIVTERVI), 901–928 (APNSSLPTTLTIPDPRESSNVVVTERVI), and 929–957 (RPTSGIVGNLSMHPDISNTHNVIVTERVV). The segment at 1019 to 1045 (FSNTLGSASPTTTRSRITKYSTVQYTK) is disordered. Positions 1020-1045 (SNTLGSASPTTTRSRITKYSTVQYTK) are enriched in polar residues.

Binds to JUP/plakoglobin. Interacts with PKP2. Interacts with DSC3; there is evidence to suggest that the interaction promotes cell-cell adhesion of keratinocytes.

It localises to the cell membrane. The protein localises to the cell junction. It is found in the desmosome. The protein resides in the cytoplasm. Its subcellular location is the nucleus. Functionally, component of intercellular desmosome junctions. Involved in the interaction of plaque proteins and intermediate filaments mediating cell-cell adhesion. This chain is Desmoglein-1 (DSG1), found in Sus scrofa (Pig).